The sequence spans 555 residues: Formate--tetrahydrofolate ligase (555 aa).

ATP is bound at residue 65–72; that stretch reads TPAGEGKS.

The protein belongs to the formate--tetrahydrofolate ligase family.

It carries out the reaction (6S)-5,6,7,8-tetrahydrofolate + formate + ATP = (6R)-10-formyltetrahydrofolate + ADP + phosphate. It participates in one-carbon metabolism; tetrahydrofolate interconversion. The protein is Formate--tetrahydrofolate ligase of Staphylococcus aureus (strain MRSA252).